The chain runs to 455 residues: tRNA-2-methylthio-N(6)-dimethylallyladenosine synthase (455 aa).

The MTTase N-terminal domain maps to 3–117 (KGLYIESYGC…LPELIMKATR (115 aa)). [4Fe-4S] cluster is bound by residues cysteine 12, cysteine 48, cysteine 80, cysteine 155, cysteine 159, and cysteine 162. In terms of domain architecture, Radical SAM core spans 141-375 (VSRGVSAFVS…LLTQQRLFTK (235 aa)).

It belongs to the methylthiotransferase family. MiaB subfamily. In terms of assembly, monomer. It depends on [4Fe-4S] cluster as a cofactor.

Its subcellular location is the cytoplasm. The catalysed reaction is N(6)-dimethylallyladenosine(37) in tRNA + (sulfur carrier)-SH + AH2 + 2 S-adenosyl-L-methionine = 2-methylsulfanyl-N(6)-dimethylallyladenosine(37) in tRNA + (sulfur carrier)-H + 5'-deoxyadenosine + L-methionine + A + S-adenosyl-L-homocysteine + 2 H(+). Functionally, catalyzes the methylthiolation of N6-(dimethylallyl)adenosine (i(6)A), leading to the formation of 2-methylthio-N6-(dimethylallyl)adenosine (ms(2)i(6)A) at position 37 in tRNAs that read codons beginning with uridine. The polypeptide is tRNA-2-methylthio-N(6)-dimethylallyladenosine synthase (Anaplasma marginale (strain St. Maries)).